We begin with the raw amino-acid sequence, 219 residues long: VQ motif-containing protein 19 (219 aa).

Residues 47–56 (FKQVVQMLTG) carry the VQ motif. Residues 52–94 (QMLTGSSSPRSPDSPRPPTTPSGKGNFVIPPIKTAQPKKHSGN) form a disordered region. A phosphoserine mark is found at serine 59, serine 65, serine 127, serine 131, serine 139, serine 141, and serine 152. Threonine 155 bears the Phosphothreonine mark. 2 disordered regions span residues 156-177 (PLKQGTNGNEGDPFDKMSPLSE) and 190-219 (HRSPISTPRDSEPQLLPLFPVTSPRLSPEM). Residues serine 192 and serine 195 each carry the phosphoserine modification. Residues threonine 196 and threonine 211 each carry the phosphothreonine modification. Phosphoserine is present on residues serine 212 and serine 216.

In terms of processing, phosphorylated on serine and threonine residues by MPK6.

The protein resides in the nucleus. In terms of biological role, may modulate WRKY transcription factor activities. The sequence is that of VQ motif-containing protein 19 from Arabidopsis thaliana (Mouse-ear cress).